The following is a 460-amino-acid chain: Bifunctional protein GlmU (460 aa).

The interval M1–R232 is pyrophosphorylase. Residues L9 to G12, K23, Q75, and G80 to T81 contribute to the UDP-N-acetyl-alpha-D-glucosamine site. D105 provides a ligand contact to Mg(2+). UDP-N-acetyl-alpha-D-glucosamine is bound by residues G142, E157, N172, and N230. N230 is a Mg(2+) binding site. Residues A233 to S253 form a linker region. Residues G254–T460 form an N-acetyltransferase region. Positions 336 and 354 each coordinate UDP-N-acetyl-alpha-D-glucosamine. The active-site Proton acceptor is H366. 2 residues coordinate UDP-N-acetyl-alpha-D-glucosamine: Y369 and N380. Acetyl-CoA is bound by residues N389 to Y390, S408, A426, and R443.

It in the N-terminal section; belongs to the N-acetylglucosamine-1-phosphate uridyltransferase family. This sequence in the C-terminal section; belongs to the transferase hexapeptide repeat family. As to quaternary structure, homotrimer. Mg(2+) serves as cofactor.

It is found in the cytoplasm. It catalyses the reaction alpha-D-glucosamine 1-phosphate + acetyl-CoA = N-acetyl-alpha-D-glucosamine 1-phosphate + CoA + H(+). It carries out the reaction N-acetyl-alpha-D-glucosamine 1-phosphate + UTP + H(+) = UDP-N-acetyl-alpha-D-glucosamine + diphosphate. It participates in nucleotide-sugar biosynthesis; UDP-N-acetyl-alpha-D-glucosamine biosynthesis; N-acetyl-alpha-D-glucosamine 1-phosphate from alpha-D-glucosamine 6-phosphate (route II): step 2/2. It functions in the pathway nucleotide-sugar biosynthesis; UDP-N-acetyl-alpha-D-glucosamine biosynthesis; UDP-N-acetyl-alpha-D-glucosamine from N-acetyl-alpha-D-glucosamine 1-phosphate: step 1/1. The protein operates within bacterial outer membrane biogenesis; LPS lipid A biosynthesis. Its function is as follows. Catalyzes the last two sequential reactions in the de novo biosynthetic pathway for UDP-N-acetylglucosamine (UDP-GlcNAc). The C-terminal domain catalyzes the transfer of acetyl group from acetyl coenzyme A to glucosamine-1-phosphate (GlcN-1-P) to produce N-acetylglucosamine-1-phosphate (GlcNAc-1-P), which is converted into UDP-GlcNAc by the transfer of uridine 5-monophosphate (from uridine 5-triphosphate), a reaction catalyzed by the N-terminal domain. The polypeptide is Bifunctional protein GlmU (Pelobacter propionicus (strain DSM 2379 / NBRC 103807 / OttBd1)).